The chain runs to 372 residues: MPNQHTMASSNLLPVGSNISTWWNFGSMLLTCLALQTLTGFFLAIHYTANINLAFSSVTHIVRDVPYGWIMQNMHAIGASMFFICIYTHIARGLYYGLYLNKEVWLSGTALLIVLMATAFFGYVLPWGQMSFWAATVITNLLTAIPYMGPKLTTWFWGGFSINDPTLTRFFALHFILPFLIISLSSIHIMLLHNEGSNNPLGTNPDIDKIPFHPYHSYKDMFIITTMIATLFIIMSFMPNLFNDPENFSKANPLVTPQHIKPEWYFLFAYGILRSIPNKLGGTMALLMSVLILTTMPFTHTSHIRSLTFRPITQVVFWTFIATFITITWTATKPVEPPFILISQMASSMYFLFFIIHPLLGWVENKIMMINH.

4 consecutive transmembrane segments (helical) span residues 25 to 45 (FGSM…FLAI), 69 to 90 (WIMQ…YTHI), 105 to 125 (WLSG…GYVL), and 170 to 190 (FFAL…IHIM). Heme b contacts are provided by histidine 75 and histidine 89. 2 residues coordinate heme b: histidine 174 and histidine 188. Histidine 193 contributes to the a ubiquinone binding site. 4 helical membrane-spanning segments follow: residues 218 to 238 (YKDM…MSFM), 280 to 300 (LGGT…PFTH), 312 to 332 (ITQV…WTAT), and 339 to 358 (FILI…IIHP).

Belongs to the cytochrome b family. In terms of assembly, the cytochrome bc1 complex contains 3 respiratory subunits (MT-CYB, CYC1 and UQCRFS1), 2 core proteins (UQCRC1 and UQCRC2) and probably 6 low-molecular weight proteins. Heme b serves as cofactor.

The protein resides in the mitochondrion inner membrane. Its function is as follows. Component of the ubiquinol-cytochrome c reductase complex (complex III or cytochrome b-c1 complex) that is part of the mitochondrial respiratory chain. The b-c1 complex mediates electron transfer from ubiquinol to cytochrome c. Contributes to the generation of a proton gradient across the mitochondrial membrane that is then used for ATP synthesis. In Pseudechis australis (Mulga snake), this protein is Cytochrome b (MT-CYB).